Reading from the N-terminus, the 267-residue chain is Small ribosomal subunit protein uS2 (267 aa).

The interval 225–267 (LREQELEGEEQEEAAPATEEEKKELIEEAVAEGEAEETEEEEK) is disordered. Acidic residues predominate over residues 251–267 (EEAVAEGEAEETEEEEK).

The protein belongs to the universal ribosomal protein uS2 family.

This is Small ribosomal subunit protein uS2 from Nitratiruptor sp. (strain SB155-2).